The sequence spans 238 residues: CBS domain-containing protein CBSX2, chloroplastic (238 aa).

The N-terminal 71 residues, 1–71 (MGSISLSNSM…ASVNNNNSVP (71 aa)), are a transit peptide targeting the chloroplast. CBS domains are found at residues 83–145 (MTPR…QNDT) and 177–234 (MTPS…KRET).

The protein resides in the plastid. It is found in the chloroplast stroma. This Arabidopsis thaliana (Mouse-ear cress) protein is CBS domain-containing protein CBSX2, chloroplastic (CBSX2).